A 748-amino-acid polypeptide reads, in one-letter code: Phosphoribosylformylglycinamidine synthase subunit PurL (748 aa).

Histidine 47 is an active-site residue. Residues tyrosine 50 and lysine 90 each contribute to the ATP site. Position 92 (glutamate 92) interacts with Mg(2+). Substrate contacts are provided by residues 93 to 96 (SHNH) and arginine 115. The active-site Proton acceptor is the histidine 94. Residue aspartate 116 participates in Mg(2+) binding. Glutamine 240 contributes to the substrate binding site. Residue aspartate 268 coordinates Mg(2+). A substrate-binding site is contributed by 312–314 (ESQ). The ATP site is built by asparagine 500 and glycine 537. Mg(2+) is bound at residue asparagine 538. Serine 540 provides a ligand contact to substrate.

The protein belongs to the FGAMS family. In terms of assembly, monomer. Part of the FGAM synthase complex composed of 1 PurL, 1 PurQ and 2 PurS subunits.

It localises to the cytoplasm. It catalyses the reaction N(2)-formyl-N(1)-(5-phospho-beta-D-ribosyl)glycinamide + L-glutamine + ATP + H2O = 2-formamido-N(1)-(5-O-phospho-beta-D-ribosyl)acetamidine + L-glutamate + ADP + phosphate + H(+). The protein operates within purine metabolism; IMP biosynthesis via de novo pathway; 5-amino-1-(5-phospho-D-ribosyl)imidazole from N(2)-formyl-N(1)-(5-phospho-D-ribosyl)glycinamide: step 1/2. Part of the phosphoribosylformylglycinamidine synthase complex involved in the purines biosynthetic pathway. Catalyzes the ATP-dependent conversion of formylglycinamide ribonucleotide (FGAR) and glutamine to yield formylglycinamidine ribonucleotide (FGAM) and glutamate. The FGAM synthase complex is composed of three subunits. PurQ produces an ammonia molecule by converting glutamine to glutamate. PurL transfers the ammonia molecule to FGAR to form FGAM in an ATP-dependent manner. PurS interacts with PurQ and PurL and is thought to assist in the transfer of the ammonia molecule from PurQ to PurL. In Leptospira biflexa serovar Patoc (strain Patoc 1 / Ames), this protein is Phosphoribosylformylglycinamidine synthase subunit PurL.